A 353-amino-acid polypeptide reads, in one-letter code: Lipase ZK262.3 (353 aa).

Positions 1 to 22 are cleaved as a signal peptide; sequence MPKNLRFSVFLLFLLCINSVFG. Residues N32 and N64 are each glycosylated (N-linked (GlcNAc...) asparagine). Residue S163 is the Nucleophile of the active site. The Charge relay system role is filled by D221. Residue N267 is glycosylated (N-linked (GlcNAc...) asparagine). An intrachain disulfide couples C277 to C288. Residue H306 is the Charge relay system of the active site.

This sequence belongs to the AB hydrolase superfamily. Lipase family.

Its subcellular location is the secreted. Functionally, probable lipase. The polypeptide is Lipase ZK262.3 (Caenorhabditis elegans).